We begin with the raw amino-acid sequence, 257 residues long: AN1-type zinc finger protein 2B (257 aa).

AN1-type zinc fingers lie at residues 4–52 (PDLG…QKDI) and 94–142 (KIFT…HQTS). Zn(2+) is bound by residues Cys10, Cys15, Cys25, Cys28, Cys33, His36, His42, Cys44, Cys100, Cys105, Cys115, Cys118, Cys123, His126, His132, and Cys134. The VCP/p97-interacting motif (VIM) stretch occupies residues 141 to 151 (TSRAGLAAISR). Positions 152-184 (AQGLASTSTAPSPSRTLPSSSSPSRATPQLPTR) are disordered. Over residues 155 to 179 (LASTSTAPSPSRTLPSSSSPSRATP) the composition is skewed to low complexity. 3 positions are modified to phosphoserine; by MAPK14: Ser163, Ser173, and Ser187. UIM domains lie at 197 to 216 (SEDEALQRALELSLAEAKPQ) and 221 to 240 (QEEDDLALAQALSASEAEYQ). Residue Cys254 is modified to Cysteine methyl ester. Residue Cys254 is the site of S-geranylgeranyl cysteine attachment. Residues 254-257 (CSLC) carry the CAAX motif motif. The propeptide at 255–257 (SLC) is removed in mature form.

Binds 'Lys-48'-linked polyubiquitin chains of ubiquitinated proteins. Associates with the proteasome complex; upon exposure to arsenite. Interacts (via VIM motif) with VCP; the interaction is direct. Interacts with BAG6. Interacts with IGF1R (nascent precursor form). Interacts with DERL1, FAF2, NPLOC4 and UFD1; probably through VCP. In terms of processing, phosphorylated by MAPK14. Phosphorylation has no effect on association with the proteasome complex.

The protein localises to the endoplasmic reticulum membrane. Its function is as follows. Plays a role in protein homeostasis by regulating both the translocation and the ubiquitin-mediated proteasomal degradation of nascent proteins at the endoplasmic reticulum. It is involved in the regulation of signal-mediated translocation of proteins into the endoplasmic reticulum. It also plays a role in the ubiquitin-mediated proteasomal degradation of proteins for which signal-mediated translocation to the endoplasmic reticulum has failed. May therefore function in the endoplasmic reticulum stress-induced pre-emptive quality control, a mechanism that selectively attenuates the translocation of newly synthesized proteins into the endoplasmic reticulum and reroutes them to the cytosol for proteasomal degradation. By controlling the steady-state expression of the IGF1R receptor, indirectly regulates the insulin-like growth factor receptor signaling pathway. The protein is AN1-type zinc finger protein 2B of Mus musculus (Mouse).